Here is a 330-residue protein sequence, read N- to C-terminus: D-lactate dehydrogenase (330 aa).

Residues 155-156, Asp-175, 206-207, Asn-212, 233-235, and Asp-259 each bind NAD(+); these read RI, MP, and MAR. Arg-235 is an active-site residue. Residue Glu-264 is part of the active site. Residue His-296 is the Proton donor of the active site.

It belongs to the D-isomer specific 2-hydroxyacid dehydrogenase family.

The enzyme catalyses (R)-lactate + NAD(+) = pyruvate + NADH + H(+). This chain is D-lactate dehydrogenase (ldhD), found in Streptococcus agalactiae serotype III (strain NEM316).